Here is a 390-residue protein sequence, read N- to C-terminus: Succinate--CoA ligase [ADP-forming] subunit beta (390 aa).

An ATP-grasp domain is found at 9–244 (KEIFREYGVP…LSEEDPVEVE (236 aa)). ATP contacts are provided by residues Lys-46, 53-55 (GRG), Glu-99, Ala-102, and Glu-107. Residues Asn-199 and Asp-213 each coordinate Mg(2+). Residues Asn-264 and 321–323 (GIV) contribute to the substrate site.

It belongs to the succinate/malate CoA ligase beta subunit family. Heterotetramer of two alpha and two beta subunits. The cofactor is Mg(2+).

It carries out the reaction succinate + ATP + CoA = succinyl-CoA + ADP + phosphate. The catalysed reaction is GTP + succinate + CoA = succinyl-CoA + GDP + phosphate. Its pathway is carbohydrate metabolism; tricarboxylic acid cycle; succinate from succinyl-CoA (ligase route): step 1/1. Succinyl-CoA synthetase functions in the citric acid cycle (TCA), coupling the hydrolysis of succinyl-CoA to the synthesis of either ATP or GTP and thus represents the only step of substrate-level phosphorylation in the TCA. The beta subunit provides nucleotide specificity of the enzyme and binds the substrate succinate, while the binding sites for coenzyme A and phosphate are found in the alpha subunit. This Nitratiruptor sp. (strain SB155-2) protein is Succinate--CoA ligase [ADP-forming] subunit beta.